We begin with the raw amino-acid sequence, 340 residues long: Probable cyclic nucleotide phosphodiesterase PsycPRwf_0181 (340 aa).

Positions 1–36 (MAPLPHSVSPRHTQVADNGRLSEPTDYHPPTEISTD) are disordered. Residues Asp-47, His-49, Asp-128, Asn-158, His-237, His-276, and His-278 each coordinate Fe cation. Residues His-49, Asp-128, and 158-159 (NH) each bind AMP. Position 278 (His-278) interacts with AMP.

The protein belongs to the cyclic nucleotide phosphodiesterase class-III family. Fe(2+) is required as a cofactor.

The protein is Probable cyclic nucleotide phosphodiesterase PsycPRwf_0181 of Psychrobacter sp. (strain PRwf-1).